Consider the following 583-residue polypeptide: MGDWGLTETSMDNYEISILSHVAMSPSRHNNLMSAYSLPSSKSSYSVISAFCTEDNIPQCISYINQELGSLGLAAHIQADPPGRASLNAAPALNAMYELLQIHRRSMNNVEELEKEQLKKTSTLEHMQTSNSRLKDQLELSIREKSGLHETERQLQLKLKTLQSCLKTEKDEVQKLQSIIASRASQYSHDAKRKEREAAKLKERLSQLLVDRKDKKLAIEMLNSVGRSDGKRSHWKTAKATASREAEMYKSLLSDYEASQRALMLENAELQKVLQQMKKEMMHILSPCPPLNRGGSAEESQELGDSDREERSAETSRETLDQSCEHAREQLTNSIRQQWRKLRNHVQKLDNQASLVQNQPPSNAEVIPLETHEHEVERMRLEVQQCKEFIHAQQQLLQQQLNTSFDDETAALLNGCYTLEEKERLKEEWRLFDEQKRNFEKERKNFTEAAIRLGREKRAFEEDRAAWLKHQFLSMTPFADRMRSSSSDGQSALSVKSEPEIRTSSSKAPPVKSSAYTTFSTPKSSKSAAVPSTIDVCRTLRLIPDYRESSATEDEESWLKSKSKVCSSDLSIFSLDEDKNPLT.

Coiled coils occupy residues 108–220 (NNVE…LAIE), 255–333 (DYEA…QLTN), and 420–453 (EEKE…AIRL). Positions 285-328 (LSPCPPLNRGGSAEESQELGDSDREERSAETSRETLDQSCEHAR) are disordered. Residues 305 to 328 (DSDREERSAETSRETLDQSCEHAR) show a composition bias toward basic and acidic residues. A disordered region spans residues 480 to 527 (DRMRSSSSDGQSALSVKSEPEIRTSSSKAPPVKSSAYTTFSTPKSSKS). Residues 484–494 (SSSSDGQSALS) are compositionally biased toward polar residues. The span at 504-515 (SSSKAPPVKSSA) shows a compositional bias: low complexity. Positions 516-527 (YTTFSTPKSSKS) are enriched in polar residues.

The protein belongs to the ADIP family.

The protein resides in the cell junction. Its subcellular location is the adherens junction. It localises to the cytoplasm. It is found in the cytoskeleton. The protein localises to the microtubule organizing center. The protein resides in the centrosome. Its subcellular location is the centriolar satellite. Its function is as follows. Belongs to an adhesion system, which plays a role in the organization of homotypic, interneuronal and heterotypic cell-cell adherens junctions (AJs). Involved in cell movement. Acts as a centrosome maturation factor, probably by maintaining the integrity of the pericentriolar material and proper microtubule nucleation at mitotic spindle poles. The polypeptide is Afadin- and alpha-actinin-binding protein (ssx2ip) (Oryzias latipes (Japanese rice fish)).